Reading from the N-terminus, the 648-residue chain is Primary amine oxidase (648 aa).

A propeptide spanning residues 1-9 (MTLNAESEA) is cleaved from the precursor. Substrate is bound at residue 299–310 (AFDSGEYNIGNM). The active-site Proton acceptor is the aspartate 301. Cysteine 320 and cysteine 346 are oxidised to a cystine. 382-387 (VANYEY) is a substrate binding site. Catalysis depends on tyrosine 385, which acts as the Schiff-base intermediate with substrate; via topaquinone. Tyrosine 385 carries the post-translational modification 2',4',5'-topaquinone. Histidine 436 and histidine 438 together coordinate Cu cation. Mn(2+) is bound by residues aspartate 445, phenylalanine 446, and aspartate 584. A Cu cation-binding site is contributed by histidine 595.

Belongs to the copper/topaquinone oxidase family. In terms of assembly, homodimer. It depends on Cu cation as a cofactor. Requires Zn(2+) as cofactor. L-topaquinone serves as cofactor. Mn(2+) is required as a cofactor. Topaquinone (TPQ) is generated by copper-dependent autoxidation of a specific tyrosyl residue.

It carries out the reaction a primary methyl amine + O2 + H2O = an aldehyde + H2O2 + NH4(+). Functionally, the exact function of MaoXI is not known. This Arthrobacter sp. (strain P1) protein is Primary amine oxidase (maoI).